The chain runs to 285 residues: UPF0173 metal-dependent hydrolase Pnuc_1524 (285 aa).

Belongs to the UPF0173 family.

The polypeptide is UPF0173 metal-dependent hydrolase Pnuc_1524 (Polynucleobacter asymbioticus (strain DSM 18221 / CIP 109841 / QLW-P1DMWA-1) (Polynucleobacter necessarius subsp. asymbioticus)).